A 96-amino-acid polypeptide reads, in one-letter code: Protein RnfH (96 aa).

Belongs to the UPF0125 (RnfH) family.

The sequence is that of Protein RnfH from Shigella flexneri.